The chain runs to 502 residues: ATP synthase subunit alpha (502 aa).

170–177 serves as a coordination point for ATP; that stretch reads GDRKTGKT.

Belongs to the ATPase alpha/beta chains family. F-type ATPases have 2 components, CF(1) - the catalytic core - and CF(0) - the membrane proton channel. CF(1) has five subunits: alpha(3), beta(3), gamma(1), delta(1), epsilon(1). CF(0) has four main subunits: a, b, b' and c.

The protein localises to the cellular thylakoid membrane. It carries out the reaction ATP + H2O + 4 H(+)(in) = ADP + phosphate + 5 H(+)(out). In terms of biological role, produces ATP from ADP in the presence of a proton gradient across the membrane. The alpha chain is a regulatory subunit. The sequence is that of ATP synthase subunit alpha from Microcystis aeruginosa (strain NIES-843 / IAM M-2473).